A 733-amino-acid polypeptide reads, in one-letter code: Folic acid synthesis protein fol1 (733 aa).

2 DHNA regions span residues 55 to 167 and 179 to 277; these read VVVE…YAER and IEFS…QIYR. Y281 is subject to Phosphotyrosine. Positions 295–454 are HPK; it reads NKIAYLSFGS…LPSQGIRLYS (160 aa). Residues 465–724 enclose the Pterin-binding domain; sequence ALTMGILNVT…DTKEMSKVVG (260 aa). A DHPS region spans residues 467-733; it reads TMGILNVTPD…GMANAIRYVP (267 aa). Position 472 (N472) interacts with Mg(2+). (7,8-dihydropterin-6-yl)methyl diphosphate is bound by residues T511, D546, N565, D637, K677, and 712–714; that span reads RVH.

This sequence in the N-terminal section; belongs to the DHNA family. It in the central section; belongs to the HPPK family. In the C-terminal section; belongs to the DHPS family. Mg(2+) is required as a cofactor.

The protein localises to the cytoplasm. It catalyses the reaction 7,8-dihydroneopterin = 6-hydroxymethyl-7,8-dihydropterin + glycolaldehyde. The enzyme catalyses 6-hydroxymethyl-7,8-dihydropterin + ATP = (7,8-dihydropterin-6-yl)methyl diphosphate + AMP + H(+). It carries out the reaction (7,8-dihydropterin-6-yl)methyl diphosphate + 4-aminobenzoate = 7,8-dihydropteroate + diphosphate. It functions in the pathway cofactor biosynthesis; tetrahydrofolate biosynthesis; 2-amino-4-hydroxy-6-hydroxymethyl-7,8-dihydropteridine diphosphate from 7,8-dihydroneopterin triphosphate: step 3/4. Its pathway is cofactor biosynthesis; tetrahydrofolate biosynthesis; 2-amino-4-hydroxy-6-hydroxymethyl-7,8-dihydropteridine diphosphate from 7,8-dihydroneopterin triphosphate: step 4/4. The protein operates within cofactor biosynthesis; tetrahydrofolate biosynthesis; 7,8-dihydrofolate from 2-amino-4-hydroxy-6-hydroxymethyl-7,8-dihydropteridine diphosphate and 4-aminobenzoate: step 1/2. In terms of biological role, catalyzes three sequential steps of tetrahydrofolate biosynthesis. This is Folic acid synthesis protein fol1 (fol1) from Schizosaccharomyces pombe (strain 972 / ATCC 24843) (Fission yeast).